The sequence spans 102 residues: Small ribosomal subunit protein uS10 (102 aa).

This sequence belongs to the universal ribosomal protein uS10 family. Part of the 30S ribosomal subunit.

Functionally, involved in the binding of tRNA to the ribosomes. The chain is Small ribosomal subunit protein uS10 from Methanoregula boonei (strain DSM 21154 / JCM 14090 / 6A8).